The sequence spans 281 residues: 4-diphosphocytidyl-2-C-methyl-D-erythritol kinase (281 aa).

Lys15 is a catalytic residue. 98–108 (PTGAGLGGGSS) contacts ATP. Asp140 is a catalytic residue.

Belongs to the GHMP kinase family. IspE subfamily.

It carries out the reaction 4-CDP-2-C-methyl-D-erythritol + ATP = 4-CDP-2-C-methyl-D-erythritol 2-phosphate + ADP + H(+). It functions in the pathway isoprenoid biosynthesis; isopentenyl diphosphate biosynthesis via DXP pathway; isopentenyl diphosphate from 1-deoxy-D-xylulose 5-phosphate: step 3/6. Its function is as follows. Catalyzes the phosphorylation of the position 2 hydroxy group of 4-diphosphocytidyl-2C-methyl-D-erythritol. The polypeptide is 4-diphosphocytidyl-2-C-methyl-D-erythritol kinase (Neisseria meningitidis serogroup C (strain 053442)).